We begin with the raw amino-acid sequence, 595 residues long: Chaperone protein HscA homolog (595 aa).

Belongs to the heat shock protein 70 family.

Its function is as follows. Chaperone involved in the maturation of iron-sulfur cluster-containing proteins. Has a low intrinsic ATPase activity which is markedly stimulated by HscB. In Rickettsia africae (strain ESF-5), this protein is Chaperone protein HscA homolog.